We begin with the raw amino-acid sequence, 547 residues long: Chaperonin GroEL 2 (547 aa).

ATP-binding positions include 30-33 (TLGP), Lys-51, 87-91 (DGTTT), Gly-415, and Asp-496.

This sequence belongs to the chaperonin (HSP60) family. As to quaternary structure, forms a cylinder of 14 subunits composed of two heptameric rings stacked back-to-back. Interacts with the co-chaperonin GroES.

The protein localises to the cytoplasm. The catalysed reaction is ATP + H2O + a folded polypeptide = ADP + phosphate + an unfolded polypeptide.. In terms of biological role, together with its co-chaperonin GroES, plays an essential role in assisting protein folding. The GroEL-GroES system forms a nano-cage that allows encapsulation of the non-native substrate proteins and provides a physical environment optimized to promote and accelerate protein folding. The protein is Chaperonin GroEL 2 of Rhodopseudomonas palustris (strain ATCC BAA-98 / CGA009).